Here is a 397-residue protein sequence, read N- to C-terminus: Putative 3'(2'),5'-bisphosphate nucleotidase, mitochondrial (397 aa).

Residues 1–16 (MYILDTGARFSAVRFS) constitute a mitochondrion transit peptide. Aspartate 91 functions as the Proton acceptor in the catalytic mechanism. Residues glutamate 114, aspartate 174, isoleucine 176, and aspartate 177 each coordinate Mg(2+). The Proton acceptor role is filled by threonine 179. Adenosine 3',5'-bisphosphate contacts are provided by threonine 179, serine 305, lysine 308, and aspartate 334. AMP contacts are provided by serine 305, lysine 308, and aspartate 334. Aspartate 334 contributes to the Mg(2+) binding site.

Belongs to the inositol monophosphatase superfamily. The cofactor is Mg(2+).

The protein resides in the mitochondrion. The catalysed reaction is 3'-phosphoadenylyl sulfate + H2O = adenosine 5'-phosphosulfate + phosphate. It carries out the reaction adenosine 3',5'-bisphosphate + H2O = AMP + phosphate. The enzyme catalyses adenosine 2',5'-bisphosphate + H2O = AMP + phosphate. Functionally, phosphatase that converts adenosine 3'-phosphate 5'-phosphosulfate (PAPS) to adenosine 5'-phosphosulfate (APS) and 3'(2')-phosphoadenosine 5'-phosphate (PAP) to AMP. The sequence is that of Putative 3'(2'),5'-bisphosphate nucleotidase, mitochondrial from Arabidopsis thaliana (Mouse-ear cress).